The sequence spans 368 residues: Germination protease (368 aa).

Residues 1 to 16 (MEKKKLDLSQYAVRTD) constitute a propeptide that is removed on maturation.

It belongs to the peptidase A25 family. In terms of assembly, homotetramer. In terms of processing, autoproteolytically processed. The inactive tetrameric zymogen termed p46 autoprocesses to a smaller form termed p41, which is active only during spore germination.

The catalysed reaction is Endopeptidase action with P4 Glu or Asp, P1 preferably Glu &gt; Asp, P1' hydrophobic and P2' Ala.. Functionally, initiates the rapid degradation of small, acid-soluble proteins during spore germination. The chain is Germination protease from Bacillus licheniformis (strain ATCC 14580 / DSM 13 / JCM 2505 / CCUG 7422 / NBRC 12200 / NCIMB 9375 / NCTC 10341 / NRRL NRS-1264 / Gibson 46).